Reading from the N-terminus, the 62-residue chain is Large ribosomal subunit protein eL37 (62 aa).

C20, C23, C35, and C38 together coordinate Zn(2+). The C4-type zinc finger occupies 20–38; sequence CRRCGRHSFNVAKGYCAAC.

It belongs to the eukaryotic ribosomal protein eL37 family. Zn(2+) serves as cofactor.

Its function is as follows. Binds to the 23S rRNA. The chain is Large ribosomal subunit protein eL37 from Desulfurococcus amylolyticus (strain DSM 18924 / JCM 16383 / VKM B-2413 / 1221n) (Desulfurococcus kamchatkensis).